Here is a 514-residue protein sequence, read N- to C-terminus: Probable cytosol aminopeptidase (514 aa).

The Mn(2+) site is built by Lys-266 and Asp-271. Lys-278 is an active-site residue. Residues Asp-289, Asp-357, and Glu-359 each coordinate Mn(2+). Arg-361 is a catalytic residue.

It belongs to the peptidase M17 family. Requires Mn(2+) as cofactor.

Its subcellular location is the cytoplasm. It carries out the reaction Release of an N-terminal amino acid, Xaa-|-Yaa-, in which Xaa is preferably Leu, but may be other amino acids including Pro although not Arg or Lys, and Yaa may be Pro. Amino acid amides and methyl esters are also readily hydrolyzed, but rates on arylamides are exceedingly low.. The catalysed reaction is Release of an N-terminal amino acid, preferentially leucine, but not glutamic or aspartic acids.. Functionally, presumably involved in the processing and regular turnover of intracellular proteins. Catalyzes the removal of unsubstituted N-terminal amino acids from various peptides. The sequence is that of Probable cytosol aminopeptidase from Oleidesulfovibrio alaskensis (strain ATCC BAA-1058 / DSM 17464 / G20) (Desulfovibrio alaskensis).